A 209-amino-acid polypeptide reads, in one-letter code: ATP synthase subunit b', chloroplastic (209 aa).

Residues 1–62 (MASLLARPQQ…NALMAMPAAA (62 aa)) constitute a chloroplast transit peptide. Residues 67 to 87 (IFDFNLTLPVMAGEFLLLMVF) form a helical membrane-spanning segment.

It belongs to the ATPase B chain family. In terms of assembly, F-type ATPases have 2 components, F(1) - the catalytic core - and F(0) - the membrane proton channel. F(1) has five subunits: alpha(3), beta(3), gamma(1), delta(1), epsilon(1). F(0) has four main subunits: a(1), b(1), b'(1) and c(10-14). The alpha and beta chains form an alternating ring which encloses part of the gamma chain. F(1) is attached to F(0) by a central stalk formed by the gamma and epsilon chains, while a peripheral stalk is formed by the delta, b and b' chains.

Its subcellular location is the plastid. It localises to the chloroplast thylakoid membrane. In terms of biological role, f(1)F(0) ATP synthase produces ATP from ADP in the presence of a proton or sodium gradient. F-type ATPases consist of two structural domains, F(1) containing the extramembraneous catalytic core and F(0) containing the membrane proton channel, linked together by a central stalk and a peripheral stalk. During catalysis, ATP synthesis in the catalytic domain of F(1) is coupled via a rotary mechanism of the central stalk subunits to proton translocation. Functionally, component of the F(0) channel, it forms part of the peripheral stalk, linking F(1) to F(0). The b'-subunit is a diverged and duplicated form of b found in plants and photosynthetic bacteria. In Chlamydomonas reinhardtii (Chlamydomonas smithii), this protein is ATP synthase subunit b', chloroplastic.